The sequence spans 133 residues: Ribosome-binding factor A (133 aa).

It belongs to the RbfA family. Monomer. Binds 30S ribosomal subunits, but not 50S ribosomal subunits or 70S ribosomes.

The protein resides in the cytoplasm. In terms of biological role, one of several proteins that assist in the late maturation steps of the functional core of the 30S ribosomal subunit. Associates with free 30S ribosomal subunits (but not with 30S subunits that are part of 70S ribosomes or polysomes). Required for efficient processing of 16S rRNA. May interact with the 5'-terminal helix region of 16S rRNA. The sequence is that of Ribosome-binding factor A from Salmonella heidelberg (strain SL476).